The following is a 213-amino-acid chain: Pyridoxine/pyridoxamine 5'-phosphate oxidase (213 aa).

Residues 57-62 (RIVLLR), 77-78 (FT), Arg-83, Lys-84, and Gln-106 contribute to the FMN site. Residue Arg-62 participates in substrate binding. Residues Tyr-124, Arg-128, and Ser-132 each contribute to the substrate site. The interval 135–163 (GARASDQSRPLPDRKTLQKRVEEEEARYP) is disordered. 141 to 142 (QS) contacts FMN. The span at 145-163 (LPDRKTLQKRVEEEEARYP) shows a compositional bias: basic and acidic residues. Trp-186 is an FMN binding site. 192 to 194 (RLH) serves as a coordination point for substrate. Residue Arg-196 coordinates FMN.

This sequence belongs to the pyridoxamine 5'-phosphate oxidase family. As to quaternary structure, homodimer. Requires FMN as cofactor.

The enzyme catalyses pyridoxamine 5'-phosphate + O2 + H2O = pyridoxal 5'-phosphate + H2O2 + NH4(+). The catalysed reaction is pyridoxine 5'-phosphate + O2 = pyridoxal 5'-phosphate + H2O2. It functions in the pathway cofactor metabolism; pyridoxal 5'-phosphate salvage; pyridoxal 5'-phosphate from pyridoxamine 5'-phosphate: step 1/1. Its pathway is cofactor metabolism; pyridoxal 5'-phosphate salvage; pyridoxal 5'-phosphate from pyridoxine 5'-phosphate: step 1/1. Its function is as follows. Catalyzes the oxidation of either pyridoxine 5'-phosphate (PNP) or pyridoxamine 5'-phosphate (PMP) into pyridoxal 5'-phosphate (PLP). This chain is Pyridoxine/pyridoxamine 5'-phosphate oxidase, found in Granulibacter bethesdensis (strain ATCC BAA-1260 / CGDNIH1).